The primary structure comprises 256 residues: Transmembrane protein 74B (256 aa).

Positions 1-111 (MPPAQGYEFA…LSLHSEEGPA (111 aa)) are disordered. Low complexity predominate over residues 80–96 (RLGSSPSPPGGVSSLPR). A compositionally biased stretch (basic and acidic residues) spans 97–108 (SQRDDLSLHSEE). 2 helical membrane-spanning segments follow: residues 123–143 (FVSALVFLVSGILLVVTAYAI) and 177–197 (IIAGLGLLTVGGMLLSVLLMV).

Belongs to the TMEM74 family.

The protein localises to the membrane. The sequence is that of Transmembrane protein 74B (TMEM74B) from Homo sapiens (Human).